The sequence spans 481 residues: Serine/threonine-protein kinase US3 (481 aa).

The disordered stretch occupies residues 12-63 (RPDKRQEASVPPETNTAPAFPASTFYTPAEDAYLAPGPPETIHPSRPPSPGE). Positions 47 to 61 (PGPPETIHPSRPPSP) are enriched in pro residues. Positions 191-478 (FAIHGALIPG…AAELLRLPLF (288 aa)) constitute a Protein kinase domain. Residues 197-205 (LIPGSEGCV) and Lys-220 each bind ATP. The Proton acceptor role is filled by Asp-305.

Belongs to the protein kinase superfamily. Ser/Thr protein kinase family. As to quaternary structure, interacts with host LAT; this interaction prevents LAT activation of TRAF6. Phosphorylated by UL13; this phosphorylation regulates subsequent phosphorylation of UL31 and UL34 by US3. Autophosphorylated.

The protein resides in the host cytoplasm. The protein localises to the host nucleus. The enzyme catalyses L-seryl-[protein] + ATP = O-phospho-L-seryl-[protein] + ADP + H(+). It carries out the reaction L-threonyl-[protein] + ATP = O-phospho-L-threonyl-[protein] + ADP + H(+). Its function is as follows. Multifunctional serine/threonine kinase that plays a role in several processes including egress of virus particles from the nucleus, modulation of the actin cytoskeleton and inhibition of host immune response. Phosphorylates UL31 and UL34, two critical regulators of capsid budding from nucleus to endoplasmic reticulum, thereby facilitating virion egress. Modulates and redistributes host components of the nuclear envelope, including LMNA, emerin/EMD and the nuclear matrix protein MATR3. In turn, facilitates nuclear pore impairment and capsid release through impaired nuclear envelope. Phosphorylates envelope glycoprotein B (gB), probably to direct it to the cell surface. Promotes virus intracellular spread by restructuring host cell cytoskeleton. Blocks host apoptosis to extend cell survival and allow efficient viral replication. Promotes viral gene expression by phosphorylating host HDAC2 to reduce viral genome silencing. Strongly inhibits TCR-activated signal transduction in T-cells by reducing the ubiquitination of LAT and TRAF6, leading to a suboptimal activation of LAT. Subverts host antiviral innate immunity by inhibiting type I interferon production through hyperphosphorylation of beta-catenin/CTNNB1. In addition, phosphorylates the RNA sensor RIGI and the transcription factor IRF3 to prevent the RLR-mediated antiviral signaling pathway. Hyperphosphorylates host RELA and thereby dampens NF-kappa-B signaling. Acts as an immunoevasin partly responsible for inhibition of MR1 expression and antigen presentation in response to bacterial infection. The protein is Serine/threonine-protein kinase US3 (US3) of Human herpesvirus 2 (strain HG52) (HHV-2).